Here is a 339-residue protein sequence, read N- to C-terminus: Anthranilate phosphoribosyltransferase (339 aa).

Residues Gly82, 85–86 (GD), 92–95 (NIST), 110–118 (KHGNRGISS), and Ser122 contribute to the 5-phospho-alpha-D-ribose 1-diphosphate site. Gly82 is an anthranilate binding site. Ser94 lines the Mg(2+) pocket. Asn113 lines the anthranilate pocket. Arg168 provides a ligand contact to anthranilate. Mg(2+)-binding residues include Asp227 and Glu228.

Belongs to the anthranilate phosphoribosyltransferase family. As to quaternary structure, homodimer. The cofactor is Mg(2+).

The enzyme catalyses N-(5-phospho-beta-D-ribosyl)anthranilate + diphosphate = 5-phospho-alpha-D-ribose 1-diphosphate + anthranilate. The protein operates within amino-acid biosynthesis; L-tryptophan biosynthesis; L-tryptophan from chorismate: step 2/5. In terms of biological role, catalyzes the transfer of the phosphoribosyl group of 5-phosphorylribose-1-pyrophosphate (PRPP) to anthranilate to yield N-(5'-phosphoribosyl)-anthranilate (PRA). The polypeptide is Anthranilate phosphoribosyltransferase (Vesicomyosocius okutanii subsp. Calyptogena okutanii (strain HA)).